An 887-amino-acid polypeptide reads, in one-letter code: Semaphorin-6B (887 aa).

An N-terminal signal peptide occupies residues 1 to 26; it reads MWTPRAPPPRPALLFLLLLLLRVTHG. Topologically, residues 27 to 605 are extracellular; the sequence is LFPDEPPPLS…VSVNLLVTSS (579 aa). In terms of domain architecture, Sema spans 32-525; it reads PPPLSVAPRD…FPRCVVRVPV (494 aa). A glycan (N-linked (GlcNAc...) asparagine) is linked at asparagine 75. Cystine bridges form between cysteine 117–cysteine 127 and cysteine 145–cysteine 154. 3 N-linked (GlcNAc...) asparagine glycosylation sites follow: asparagine 156, asparagine 168, and asparagine 292. 2 disulfide bridges follow: cysteine 268-cysteine 379 and cysteine 293-cysteine 338. 3 N-linked (GlcNAc...) asparagine glycosylation sites follow: asparagine 387, asparagine 442, and asparagine 463. Disulfide bonds link cysteine 487–cysteine 519, cysteine 528–cysteine 546, cysteine 534–cysteine 580, and cysteine 538–cysteine 554. A helical membrane pass occupies residues 606–626; sequence VAAFVVGAVVSGFSVGWFVGL. Residues 627–887 are Cytoplasmic-facing; it reads RERRELARRK…TGERTAPPVP (261 aa). Disordered stretches follow at residues 656–675, 697–717, and 759–887; these read LGER…GGPG, HGGP…TPLP, and APEQ…PPVP. The span at 662–674 shows a compositional bias: gly residues; sequence TGTGGRGGAGGGP. Arginine 667 carries the post-translational modification Omega-N-methylarginine. Residues 707-717 show a composition bias toward low complexity; the sequence is LLPTPEQTPLP.

It belongs to the semaphorin family.

Its subcellular location is the cell membrane. Functionally, functions as a cell surface repellent for mossy fibers of developing neurons in the hippocampus where it plays a role in axon guidance. May function through the PLXNA4 receptor expressed by mossy cell axons. The polypeptide is Semaphorin-6B (Sema6b) (Rattus norvegicus (Rat)).